We begin with the raw amino-acid sequence, 306 residues long: Agmatinase (306 aa).

The Mn(2+) site is built by histidine 126, aspartate 149, histidine 151, aspartate 153, aspartate 230, and aspartate 232.

Belongs to the arginase family. Agmatinase subfamily. Requires Mn(2+) as cofactor.

The catalysed reaction is agmatine + H2O = urea + putrescine. Its pathway is amine and polyamine biosynthesis; putrescine biosynthesis via agmatine pathway; putrescine from agmatine: step 1/1. Its function is as follows. Catalyzes the formation of putrescine from agmatine. This is Agmatinase from Escherichia coli O7:K1 (strain IAI39 / ExPEC).